A 341-amino-acid chain; its full sequence is Putative [LysW]-lysine/[LysW]-ornithine hydrolase (341 aa).

Residue His62 coordinates Zn(2+). The active site involves Asp64. Position 86 (Asp86) interacts with Zn(2+). Glu115 acts as the Proton acceptor in catalysis. Positions 116, 140, and 309 each coordinate Zn(2+).

It belongs to the peptidase M20A family. LysK subfamily. Zn(2+) serves as cofactor. The cofactor is Co(2+).

The protein resides in the cytoplasm. The catalysed reaction is [amino-group carrier protein]-C-terminal-gamma-(L-lysyl)-L-glutamate + H2O = [amino-group carrier protein]-C-terminal-L-glutamate + L-lysine. It carries out the reaction [amino-group carrier protein]-C-terminal-gamma-(L-ornithyl)-L-glutamate + H2O = [amino-group carrier protein]-C-terminal-L-glutamate + L-ornithine. The protein operates within amino-acid biosynthesis; L-lysine biosynthesis via AAA pathway; L-lysine from L-alpha-aminoadipate (Thermus route): step 5/5. Its pathway is amino-acid biosynthesis; L-arginine biosynthesis. Its function is as follows. Catalyzes the release of L-lysine from [LysW]-gamma-L-lysine and the release of L-ornithine from [LysW]-L-ornithine. This is Putative [LysW]-lysine/[LysW]-ornithine hydrolase from Pyrobaculum aerophilum (strain ATCC 51768 / DSM 7523 / JCM 9630 / CIP 104966 / NBRC 100827 / IM2).